A 219-amino-acid chain; its full sequence is DnaJ homolog subfamily C member 30, mitochondrial (219 aa).

The N-terminal 38 residues, 1-38 (MAAARCLGWTLSPLWRWWQVRGLPPSSATGLCSRGRTY), are a transit peptide targeting the mitochondrion. The region spanning 42–107 (ALYELLGVPS…ILRRKYDRGL (66 aa)) is the J domain. Residues 109 to 148 (SDQDLRGPGVKPSKTPVADPAPPRPPPYTPRAPGGSRASP) form a disordered region. Positions 127-138 (DPAPPRPPPYTP) are enriched in pro residues. A helical transmembrane segment spans residues 202–218 (ATFFVVLFLIFVFVGFR).

As to quaternary structure, associates with the ATP synthase complex. Interacts with MT-ATP6; interaction is direct. Interacts with ATP5MC2; interaction is direct. In brain, expressed in gray matter structures.

It localises to the mitochondrion inner membrane. Functionally, mitochondrial protein enriched in neurons that acts as a regulator of mitochondrial respiration. Associates with the ATP synthase complex and facilitates ATP synthesis. May be a chaperone protein involved in the turnover of the subunits of mitochondrial complex I N-module. It facilitates the degradation of N-module subunits damaged by oxidative stress, and contributes to complex I functional efficiency. In Mus musculus (Mouse), this protein is DnaJ homolog subfamily C member 30, mitochondrial.